The primary structure comprises 767 residues: Probable ubiquitin carboxyl-terminal hydrolase creB (767 aa).

The USP domain maps to 49-462; that stretch reads YGMENYGNTC…CAYVLFYQET (414 aa). C58 functions as the Nucleophile in the catalytic mechanism. 2 disordered regions span residues 107–140 and 232–263; these read EAEAQAEKQKAANAQRPGMPPNPQQKPEDKDSPE and ASKQPPIEKSLPAPETADSVDQSSSTGSKTPN. A compositionally biased stretch (polar residues) spans 250 to 263; it reads SVDQSSSTGSKTPN. H413 serves as the catalytic Proton acceptor. The disordered stretch occupies residues 490–767; the sequence is LKQNGFPQSP…LRKKSFSILS (278 aa). Low complexity-rich tracts occupy residues 540-554 and 564-573; these read ESAPFSPLSPLSPLS and ERVTTVATPP. The stretch at 574–641 forms a coiled coil; it reads KNDALAKKER…ASKAEEDRRL (68 aa). Basic and acidic residues predominate over residues 577-650; the sequence is ALAKKERARE…LSHENGKEKQ (74 aa). Positions 656-667 are enriched in basic residues; that stretch reads RLKRGSKSLSHR. A compositionally biased stretch (polar residues) spans 690 to 700; that stretch reads STLSQTGPTSE. A compositionally biased stretch (low complexity) spans 701 to 713; the sequence is QQQQQQQQQQQQQ. Over residues 731-749 the composition is skewed to basic and acidic residues; the sequence is TIREDEQVNHKDSKHERTG. Over residues 750 to 767 the composition is skewed to basic residues; it reads HGKWRSFSLRKKSFSILS.

Belongs to the peptidase C19 family. Interacts with creA, creC and qutD.

The enzyme catalyses Thiol-dependent hydrolysis of ester, thioester, amide, peptide and isopeptide bonds formed by the C-terminal Gly of ubiquitin (a 76-residue protein attached to proteins as an intracellular targeting signal).. Ubiquitin thioesterase component of the regulatory network controlling carbon source utilization through ubiquitination and deubiquitination involving creA, creB, creC, creD and acrB. Deubiquitinates the creA catabolic repressor and the quinate permease qutD. Also plays a role in response to carbon starvation and the control of extracellular proteases activity. The protein is Probable ubiquitin carboxyl-terminal hydrolase creB (creB) of Aspergillus fumigatus (strain CBS 144.89 / FGSC A1163 / CEA10) (Neosartorya fumigata).